Consider the following 551-residue polypeptide: uncharacterized protein (551 aa).

The transit peptide at 1–36 directs the protein to the mitochondrion; the sequence is MMALVRDRRAHYVMSIVIRWVHCFSSSLRGTFGTRW. Residues 203–315 adopt a coiled-coil conformation; that stretch reads TNILLRKLKE…MDSRDRLREE (113 aa). The interval 354 to 389 is disordered; that stretch reads REASLSPWPKSPPSTTALRPHSATMSVSSAGAQKAK. Residues 366–384 are compositionally biased toward polar residues; sequence PSTTALRPHSATMSVSSAG. The stretch at 405–439 forms a coiled coil; that stretch reads KHGLESQIEALKANLENEKKKVERFRKEADRLNKS. Residues 519-551 are disordered; it reads LQLSPKGKLSESPKEESLEEPSMRQSSPAETVD. The segment covering 541–551 has biased composition (polar residues); it reads MRQSSPAETVD.

In terms of assembly, interacts with NOD2.

The protein resides in the mitochondrion. This is an uncharacterized protein from Homo sapiens (Human).